Reading from the N-terminus, the 68-residue chain is Large ribosomal subunit protein uL29 (68 aa).

The protein belongs to the universal ribosomal protein uL29 family.

The protein is Large ribosomal subunit protein uL29 of Acidiphilium cryptum (strain JF-5).